Reading from the N-terminus, the 34-residue chain is MSDIN-like toxin proprotein 5 (34 aa).

The propeptide occupies 1-10 (MSDINTARLP). Positions 11–20 (YVVFMSFIPP) form a cross-link, cyclopeptide (Tyr-Pro). Positions 21-34 (CVNDDIQVVLTRGE) are excised as a propeptide.

This sequence belongs to the MSDIN fungal toxin family. Processed by the macrocyclase-peptidase enzyme POPB to yield a toxic cyclic decapeptide. POPB first removes 10 residues from the N-terminus. Conformational trapping of the remaining peptide forces the enzyme to release this intermediate rather than proceed to macrocyclization. The enzyme rebinds the remaining peptide in a different conformation and catalyzes macrocyclization of the N-terminal 10 residues.

In terms of biological role, probable toxin that belongs to the MSDIN-like toxin family responsible for a large number of food poisoning cases and deaths. The protein is MSDIN-like toxin proprotein 5 of Amanita bisporigera (Destroying angel).